Here is an 889-residue protein sequence, read N- to C-terminus: DNA mismatch repair protein MutS (889 aa).

Residue 620-627 participates in ATP binding; the sequence is GPNMAGKS. The interval 812–831 is disordered; that stretch reads AAAPSGAARRGRPAREKEPG.

Belongs to the DNA mismatch repair MutS family.

Its function is as follows. This protein is involved in the repair of mismatches in DNA. It is possible that it carries out the mismatch recognition step. This protein has a weak ATPase activity. In Syntrophobacter fumaroxidans (strain DSM 10017 / MPOB), this protein is DNA mismatch repair protein MutS.